The following is a 1857-amino-acid chain: Fer-1-like protein 6 (1857 aa).

Over 1–1824 (MFGLKVKKKR…YLIWKNYKKY (1824 aa)) the chain is Cytoplasmic. The segment at 15–63 (KGLILANKAAKDSQGDTEALQEEPSHQEGPRGDLVHDDASIFPVPSASP) is disordered. Residues 37-53 (EPSHQEGPRGDLVHDDA) show a composition bias toward basic and acidic residues. 2 consecutive C2 domains span residues 65-181 (RRSK…QFCN) and 225-356 (PIEK…DKGF). The span at 426–447 (SKDKDSKSSKGKDKADKTEDGK) shows a compositional bias: basic and acidic residues. Residues 426–469 (SKDKDSKSSKGKDKADKTEDGKSQQASNKTNSTEVEVESFDVPP) form a disordered region. Polar residues predominate over residues 448–459 (SQQASNKTNSTE). 2 consecutive C2 domains span residues 810 to 937 (GTNH…RLCY) and 969 to 1099 (PVEP…LAPI). Positions 842, 848, 904, and 906 each coordinate Ca(2+). Disordered stretches follow at residues 1101–1148 (QVDG…VVPD), 1161–1203 (PDSS…RTIA), and 1224–1246 (AQKA…PDEV). The span at 1113–1129 (DSLTATESSGAHSSSQD) shows a compositional bias: polar residues. The span at 1178–1189 (PPKDGKPKDPRK) shows a compositional bias: basic and acidic residues. The segment covering 1190-1200 (PSRRSTKRRKR) has biased composition (basic residues). The segment covering 1226 to 1245 (KAKERNPKGKKGNTEAKPDE) has biased composition (basic and acidic residues). 2 consecutive C2 domains span residues 1338 to 1457 (DSGQ…AICG) and 1578 to 1729 (DMPQ…KACD). Positions 1372, 1378, 1427, 1429, and 1435 each coordinate Ca(2+). A helical membrane pass occupies residues 1825-1845 (IIIAFILIILIIFLVLFIYTL). Residues 1846–1857 (PGAISRRIVVGS) are Extracellular-facing.

This sequence belongs to the ferlin family. Requires Ca(2+) as cofactor.

The protein resides in the membrane. The chain is Fer-1-like protein 6 (FER1L6) from Homo sapiens (Human).